The following is a 364-amino-acid chain: Aminomethyltransferase (364 aa).

This sequence belongs to the GcvT family. The glycine cleavage system is composed of four proteins: P, T, L and H.

The catalysed reaction is N(6)-[(R)-S(8)-aminomethyldihydrolipoyl]-L-lysyl-[protein] + (6S)-5,6,7,8-tetrahydrofolate = N(6)-[(R)-dihydrolipoyl]-L-lysyl-[protein] + (6R)-5,10-methylene-5,6,7,8-tetrahydrofolate + NH4(+). Functionally, the glycine cleavage system catalyzes the degradation of glycine. In Shewanella sp. (strain MR-4), this protein is Aminomethyltransferase.